A 532-amino-acid chain; its full sequence is Putative cysteine desulfurase PbSufS (532 aa).

Positions 1-18 are cleaved as a signal peptide; the sequence is MNNESICILLLLFVKITS. Lys286 is subject to N6-(pyridoxal phosphate)lysine. The active-site Cysteine persulfide intermediate is the Cys480.

This sequence belongs to the class-V pyridoxal-phosphate-dependent aminotransferase family. Csd subfamily. In terms of assembly, monomer. Interacts with SufE; interaction enhances cysteine desulfurase activity of SufS. The cofactor is pyridoxal 5'-phosphate.

Its subcellular location is the plastid. It localises to the apicoplast. The catalysed reaction is (sulfur carrier)-H + L-cysteine = (sulfur carrier)-SH + L-alanine. The protein operates within cofactor biosynthesis; iron-sulfur cluster biosynthesis. Functionally, catalyzes sulfur activation and mobilization in sulfur mobilization (SUF) pathway for iron-sulfur (Fe-S) cluster biogenesis. Active when in complex with a partner protein SufE. Required for apicoplast maintenance. Plays a role in the development of sporozoites in oocysts in mosquitoes. In Plasmodium berghei (strain Anka), this protein is Putative cysteine desulfurase PbSufS.